Here is a 323-residue protein sequence, read N- to C-terminus: Aspartate carbamoyltransferase catalytic subunit (323 aa).

Residues R71 and T72 each contribute to the carbamoyl phosphate site. L-aspartate is bound at residue K99. Residues R121, H151, and Q154 each coordinate carbamoyl phosphate. L-aspartate-binding residues include R184 and R239. Residues G280 and P281 each coordinate carbamoyl phosphate.

It belongs to the aspartate/ornithine carbamoyltransferase superfamily. ATCase family. In terms of assembly, heterododecamer (2C3:3R2) of six catalytic PyrB chains organized as two trimers (C3), and six regulatory PyrI chains organized as three dimers (R2).

It carries out the reaction carbamoyl phosphate + L-aspartate = N-carbamoyl-L-aspartate + phosphate + H(+). It functions in the pathway pyrimidine metabolism; UMP biosynthesis via de novo pathway; (S)-dihydroorotate from bicarbonate: step 2/3. Catalyzes the condensation of carbamoyl phosphate and aspartate to form carbamoyl aspartate and inorganic phosphate, the committed step in the de novo pyrimidine nucleotide biosynthesis pathway. In Cupriavidus pinatubonensis (strain JMP 134 / LMG 1197) (Cupriavidus necator (strain JMP 134)), this protein is Aspartate carbamoyltransferase catalytic subunit.